Consider the following 561-residue polypeptide: Putative periplasmic trehalase (561 aa).

An N-terminal signal peptide occupies residues methionine 1–alanine 30. Substrate contacts are provided by residues arginine 148, tryptophan 155–aspartate 156, asparagine 192, arginine 201–glutamine 203, arginine 273–glutamate 275, and glycine 306. Catalysis depends on proton donor/acceptor residues aspartate 308 and glutamate 492. Glutamate 507 contacts substrate. Residues cysteine 535–proline 561 form a disordered region.

It belongs to the glycosyl hydrolase 37 family. As to quaternary structure, monomer.

The protein resides in the periplasm. The enzyme catalyses alpha,alpha-trehalose + H2O = alpha-D-glucose + beta-D-glucose. Functionally, provides the cells with the ability to utilize trehalose at high osmolarity by splitting it into glucose molecules that can subsequently be taken up by the phosphotransferase-mediated uptake system. The chain is Putative periplasmic trehalase from Escherichia coli O157:H7.